Here is a 233-residue protein sequence, read N- to C-terminus: Aspartate/glutamate leucyltransferase (233 aa).

Belongs to the R-transferase family. Bpt subfamily.

The protein localises to the cytoplasm. The catalysed reaction is N-terminal L-glutamyl-[protein] + L-leucyl-tRNA(Leu) = N-terminal L-leucyl-L-glutamyl-[protein] + tRNA(Leu) + H(+). The enzyme catalyses N-terminal L-aspartyl-[protein] + L-leucyl-tRNA(Leu) = N-terminal L-leucyl-L-aspartyl-[protein] + tRNA(Leu) + H(+). Its function is as follows. Functions in the N-end rule pathway of protein degradation where it conjugates Leu from its aminoacyl-tRNA to the N-termini of proteins containing an N-terminal aspartate or glutamate. This Vibrio cholerae serotype O1 (strain ATCC 39541 / Classical Ogawa 395 / O395) protein is Aspartate/glutamate leucyltransferase.